A 688-amino-acid chain; its full sequence is DNA-directed RNA polymerase subunit beta' (688 aa).

Zn(2+) contacts are provided by Cys-69, Cys-71, Cys-87, and Cys-90. Residues Asp-497, Asp-499, and Asp-501 each coordinate Mg(2+).

This sequence belongs to the RNA polymerase beta' chain family. RpoC1 subfamily. In terms of assembly, in plastids the minimal PEP RNA polymerase catalytic core is composed of four subunits: alpha, beta, beta', and beta''. When a (nuclear-encoded) sigma factor is associated with the core the holoenzyme is formed, which can initiate transcription. Mg(2+) serves as cofactor. Zn(2+) is required as a cofactor.

The protein localises to the plastid. It is found in the chloroplast. It carries out the reaction RNA(n) + a ribonucleoside 5'-triphosphate = RNA(n+1) + diphosphate. In terms of biological role, DNA-dependent RNA polymerase catalyzes the transcription of DNA into RNA using the four ribonucleoside triphosphates as substrates. The protein is DNA-directed RNA polymerase subunit beta' of Sinapis alba (White mustard).